A 685-amino-acid polypeptide reads, in one-letter code: Probable transketolase (685 aa).

Residue His-32 coordinates substrate. Thiamine diphosphate-binding positions include His-72 and Gly-121 to Leu-123. Residue Asp-162 participates in Mg(2+) binding. Thiamine diphosphate contacts are provided by Gly-163 and Asn-192. Residues Asn-192 and Ile-194 each contribute to the Mg(2+) site. Substrate contacts are provided by His-268, Arg-363, and Ser-390. Residue His-268 coordinates thiamine diphosphate. Glu-422 and Phe-448 together coordinate thiamine diphosphate. The Proton donor role is filled by Glu-422. Substrate is bound by residues His-472, Asp-480, and Arg-531.

Belongs to the transketolase family. As to quaternary structure, homodimer. Mg(2+) serves as cofactor. Ca(2+) is required as a cofactor. Requires Mn(2+) as cofactor. The cofactor is Co(2+). It depends on thiamine diphosphate as a cofactor.

It carries out the reaction D-sedoheptulose 7-phosphate + D-glyceraldehyde 3-phosphate = aldehydo-D-ribose 5-phosphate + D-xylulose 5-phosphate. Catalyzes the transfer of a two-carbon ketol group from a ketose donor to an aldose acceptor, via a covalent intermediate with the cofactor thiamine pyrophosphate. This Schizosaccharomyces pombe (strain 972 / ATCC 24843) (Fission yeast) protein is Probable transketolase.